The chain runs to 301 residues: Ras-related GTP-binding protein A (301 aa).

GTP contacts are provided by residues 9-16 (GRSESGKT), 57-61 (DCGGQ), and 122-125 (HKMD).

Belongs to the GTR/RAG GTP-binding protein family.

Its subcellular location is the cytoplasm. It localises to the nucleus. The protein resides in the lysosome. Its function is as follows. Guanine nucleotide-binding protein that plays a crucial role in the cellular response to amino acid availability through regulation of the TOR signaling cascade. In Dictyostelium discoideum (Social amoeba), this protein is Ras-related GTP-binding protein A (ragA).